The sequence spans 147 residues: uncharacterized protein (147 aa).

The signal sequence occupies residues 1–21 (MRTIFVGVLLLAIMGEGRLCA).

This is an uncharacterized protein from Treponema pallidum (strain Nichols).